The chain runs to 490 residues: MSRFGLQKLYINGAYVDSTDGKTFNAVNPANGEVLAEIQSASAEDVNRAVASAASGQKVWAAMTAMARSRILRRAVDILRERNDELAALETLDTGKAMSETTAVDIVTGADVLEYYAGLIPSIEGQQIPLRDTSFVYTRREPLGVVAGIGAWNYPIQIALWKSAPALAAGNAMIFKPSEVTSLTALKLAEIYTEAGLPDGVFNVVTGSGAEVGQYLTDHPGIAKVSFTGGVKTGKKVMANASGSTLKEVTMELGGKSPLIIFDDADLDRAADIAMMANFYSSGQVCTNGTRVFVPAALQAQFEAKILERVKRIRLGDPTDPQTNFGPLVSFAHMESVLRFIESGKNSGARLLCGGERVTEGEFAKGAYVAPTVFTDCRDEMEIVREEIFGPVMSILSYQSEEEVVRRANDTTFGLAAGVVTNDLTRAHRVIHQLEAGICWINTWGESAAEMPVGGYKQSGVGRENGLMTLEHYTQIKSVQVELGEYASVF.

Asp-93 serves as a coordination point for K(+). 150-152 (GAW) lines the NAD(+) pocket. The active-site Charge relay system is Lys-162. 176–179 (KPSE) serves as a coordination point for NAD(+). Val-180 contacts K(+). 230–233 (GVKT) is an NAD(+) binding site. Residue Leu-246 participates in K(+) binding. Glu-252 acts as the Proton acceptor in catalysis. The NAD(+) site is built by Gly-254, Cys-286, and Glu-387. Cys-286 (nucleophile) is an active-site residue. Residue Cys-286 is modified to Cysteine sulfenic acid (-SOH). Positions 457 and 460 each coordinate K(+). Catalysis depends on Glu-464, which acts as the Charge relay system.

This sequence belongs to the aldehyde dehydrogenase family. As to quaternary structure, dimer of dimers. K(+) serves as cofactor.

It catalyses the reaction betaine aldehyde + NAD(+) + H2O = glycine betaine + NADH + 2 H(+). The protein operates within amine and polyamine biosynthesis; betaine biosynthesis via choline pathway; betaine from betaine aldehyde: step 1/1. Functionally, involved in the biosynthesis of the osmoprotectant glycine betaine. Catalyzes the irreversible oxidation of betaine aldehyde to the corresponding acid. This Serratia proteamaculans (strain 568) protein is Betaine aldehyde dehydrogenase.